The sequence spans 316 residues: N-acetyl-gamma-glutamyl-phosphate reductase (316 aa).

Residue cysteine 136 is part of the active site.

This sequence belongs to the NAGSA dehydrogenase family. Type 1 subfamily.

It localises to the cytoplasm. The enzyme catalyses N-acetyl-L-glutamate 5-semialdehyde + phosphate + NADP(+) = N-acetyl-L-glutamyl 5-phosphate + NADPH + H(+). The protein operates within amino-acid biosynthesis; L-arginine biosynthesis; N(2)-acetyl-L-ornithine from L-glutamate: step 3/4. Functionally, catalyzes the NADPH-dependent reduction of N-acetyl-5-glutamyl phosphate to yield N-acetyl-L-glutamate 5-semialdehyde. The polypeptide is N-acetyl-gamma-glutamyl-phosphate reductase (Xanthomonas campestris pv. campestris (strain 8004)).